We begin with the raw amino-acid sequence, 160 residues long: 6,7-dimethyl-8-ribityllumazine synthase (160 aa).

Residues F32, 66 to 68 (ALE), and 90 to 92 (CII) each bind 5-amino-6-(D-ribitylamino)uracil. Residue 95–96 (ET) participates in (2S)-2-hydroxy-3-oxobutyl phosphate binding. H98 serves as the catalytic Proton donor. A 5-amino-6-(D-ribitylamino)uracil-binding site is contributed by N123. R137 lines the (2S)-2-hydroxy-3-oxobutyl phosphate pocket.

It belongs to the DMRL synthase family.

It carries out the reaction (2S)-2-hydroxy-3-oxobutyl phosphate + 5-amino-6-(D-ribitylamino)uracil = 6,7-dimethyl-8-(1-D-ribityl)lumazine + phosphate + 2 H2O + H(+). It participates in cofactor biosynthesis; riboflavin biosynthesis; riboflavin from 2-hydroxy-3-oxobutyl phosphate and 5-amino-6-(D-ribitylamino)uracil: step 1/2. Its function is as follows. Catalyzes the formation of 6,7-dimethyl-8-ribityllumazine by condensation of 5-amino-6-(D-ribitylamino)uracil with 3,4-dihydroxy-2-butanone 4-phosphate. This is the penultimate step in the biosynthesis of riboflavin. The sequence is that of 6,7-dimethyl-8-ribityllumazine synthase from Methylibium petroleiphilum (strain ATCC BAA-1232 / LMG 22953 / PM1).